The sequence spans 256 residues: Ribonuclease 3 (256 aa).

Positions leucine 3–glycine 125 constitute an RNase III domain. Residue glutamate 38 coordinates Mg(2+). Aspartate 42 is an active-site residue. Aspartate 111 and glutamate 114 together coordinate Mg(2+). Residue glutamate 114 is part of the active site. Residues aspartate 152 to lysine 222 form the DRBM domain. Residues lysine 229–glutamate 256 are disordered.

It belongs to the ribonuclease III family. As to quaternary structure, homodimer. Mg(2+) is required as a cofactor.

It localises to the cytoplasm. It carries out the reaction Endonucleolytic cleavage to 5'-phosphomonoester.. Digests double-stranded RNA. Involved in the processing of primary rRNA transcript to yield the immediate precursors to the large and small rRNAs (23S and 16S). Processes some mRNAs, and tRNAs when they are encoded in the rRNA operon. Processes pre-crRNA and tracrRNA of type II CRISPR loci if present in the organism. This is Ribonuclease 3 from Cupriavidus taiwanensis (strain DSM 17343 / BCRC 17206 / CCUG 44338 / CIP 107171 / LMG 19424 / R1) (Ralstonia taiwanensis (strain LMG 19424)).